A 22-amino-acid chain; its full sequence is Caerin-3.2 (22 aa).

Lys22 is modified (lysine amide).

In terms of tissue distribution, expressed by the skin parotoid and/or rostral glands.

It is found in the secreted. Antibacterial peptide, that adopts an alpha helical conformation which can disrupt bacterial membranes. Each caerin displays a different antimicrobial specificity. In Ranoidea caerulea (Green tree frog), this protein is Caerin-3.2.